Consider the following 205-residue polypeptide: ATP phosphoribosyltransferase (205 aa).

This sequence belongs to the ATP phosphoribosyltransferase family. Short subfamily. In terms of assembly, heteromultimer composed of HisG and HisZ subunits.

The protein resides in the cytoplasm. The catalysed reaction is 1-(5-phospho-beta-D-ribosyl)-ATP + diphosphate = 5-phospho-alpha-D-ribose 1-diphosphate + ATP. The protein operates within amino-acid biosynthesis; L-histidine biosynthesis; L-histidine from 5-phospho-alpha-D-ribose 1-diphosphate: step 1/9. Functionally, catalyzes the condensation of ATP and 5-phosphoribose 1-diphosphate to form N'-(5'-phosphoribosyl)-ATP (PR-ATP). Has a crucial role in the pathway because the rate of histidine biosynthesis seems to be controlled primarily by regulation of HisG enzymatic activity. This is ATP phosphoribosyltransferase from Helicobacter hepaticus (strain ATCC 51449 / 3B1).